The chain runs to 46 residues: uncharacterized protein (46 aa).

Its subcellular location is the mitochondrion. This is an uncharacterized protein from Saccharomyces cerevisiae (strain ATCC 204508 / S288c) (Baker's yeast).